Here is a 59-residue protein sequence, read N- to C-terminus: Large ribosomal subunit protein bL32 (59 aa).

The interval 1–59 is disordered; the sequence is MAVQQNRKTPSKRGMRRSHDSLSKPTLSTEQNTGETHRRHHISADGYYRGRKVTRGQDD. The span at 23-34 shows a compositional bias: polar residues; that stretch reads SKPTLSTEQNTG. The span at 49–59 shows a compositional bias: basic residues; it reads RGRKVTRGQDD.

This sequence belongs to the bacterial ribosomal protein bL32 family.

The protein is Large ribosomal subunit protein bL32 of Halorhodospira halophila (strain DSM 244 / SL1) (Ectothiorhodospira halophila (strain DSM 244 / SL1)).